Here is a 486-residue protein sequence, read N- to C-terminus: D-mannonate oxidoreductase (486 aa).

Isoleucine 25–alanine 36 contacts NAD(+).

This sequence belongs to the mannitol dehydrogenase family. UxuB subfamily.

It carries out the reaction D-mannonate + NAD(+) = keto-D-fructuronate + NADH + H(+). It functions in the pathway carbohydrate metabolism; pentose and glucuronate interconversion. The polypeptide is D-mannonate oxidoreductase (uxuB) (Escherichia coli (strain K12)).